Here is a 469-residue protein sequence, read N- to C-terminus: 3-isopropylmalate dehydratase large subunit (469 aa).

[4Fe-4S] cluster contacts are provided by C350, C410, and C413.

Belongs to the aconitase/IPM isomerase family. LeuC type 1 subfamily. Heterodimer of LeuC and LeuD. Requires [4Fe-4S] cluster as cofactor.

It carries out the reaction (2R,3S)-3-isopropylmalate = (2S)-2-isopropylmalate. It participates in amino-acid biosynthesis; L-leucine biosynthesis; L-leucine from 3-methyl-2-oxobutanoate: step 2/4. Functionally, catalyzes the isomerization between 2-isopropylmalate and 3-isopropylmalate, via the formation of 2-isopropylmaleate. This is 3-isopropylmalate dehydratase large subunit from Rhizobium etli (strain CIAT 652).